We begin with the raw amino-acid sequence, 195 residues long: Imidazoleglycerol-phosphate dehydratase (195 aa).

The protein belongs to the imidazoleglycerol-phosphate dehydratase family.

The protein localises to the cytoplasm. The enzyme catalyses D-erythro-1-(imidazol-4-yl)glycerol 3-phosphate = 3-(imidazol-4-yl)-2-oxopropyl phosphate + H2O. It participates in amino-acid biosynthesis; L-histidine biosynthesis; L-histidine from 5-phospho-alpha-D-ribose 1-diphosphate: step 6/9. The polypeptide is Imidazoleglycerol-phosphate dehydratase (Methylorubrum populi (strain ATCC BAA-705 / NCIMB 13946 / BJ001) (Methylobacterium populi)).